We begin with the raw amino-acid sequence, 503 residues long: ATP-dependent RNA helicase dbp3 (503 aa).

Over residues 1-25 the composition is skewed to basic and acidic residues; that stretch reads MAKRVQHEGGDYRPQKRSKNERNGE. Residues 1–35 are disordered; the sequence is MAKRVQHEGGDYRPQKRSKNERNGEGSKVSPSAEA. The Q motif signature appears at 104–112; the sequence is SFSSPTPIQ. In terms of domain architecture, Helicase ATP-binding spans 116 to 292; sequence WPLLFAGRDV…ATFMTSAVTV (177 aa). 129–136 lines the ATP pocket; sequence AETGSGKT. The short motif at 239–242 is the DEAD box element; that stretch reads DEAD. Positions 307–472 constitute a Helicase C-terminal domain; the sequence is RIKQVVEVVK…DVPDALLKFG (166 aa).

This sequence belongs to the DEAD box helicase family. DDX5/DBP2 subfamily.

Its subcellular location is the nucleus. The protein localises to the nucleolus. The enzyme catalyses ATP + H2O = ADP + phosphate + H(+). ATP-dependent RNA helicase required for 60S ribosomal subunit synthesis. Involved in efficient pre-rRNA processing, predominantly at site A3, which is necessary for the normal formation of 25S and 5.8S rRNAs. In Neosartorya fischeri (strain ATCC 1020 / DSM 3700 / CBS 544.65 / FGSC A1164 / JCM 1740 / NRRL 181 / WB 181) (Aspergillus fischerianus), this protein is ATP-dependent RNA helicase dbp3 (dbp3).